We begin with the raw amino-acid sequence, 373 residues long: MNDTQDFISAQAAVLRQVGGPLAVEPVRISMPKGDEVLIRIAGVGVCHTDLVCRDGFPVPLPIVLGHEGSGTVEAVGEQVRTLKPGDRVVLSFNSCGHCGNCHDGHPSNCLQMLPLNFGGAQRVDGGQVLDGAGHPVQSMFFGQSSFGTHAVAREINAVKVGDDLPLELLGPLGCGIQTGAGAAINSLGIGPGQSLAIFGGGGVGLSALLGARAVGADRVVVIEPNAARRALALELGASHALDPHAEGDLVAAIKAATGGGATHSLDTTGLPPVIGSAIACTLPGGTVGMVGLPAPDAPVPATLLDLLSKSVTLRPITEGDADPQRFIPRMLDFHRAGKFPFDRLITRYRFDQINEALHATEKGEAIKPVLVF.

Zn(2+) contacts are provided by C47, H67, C96, C99, C102, C110, and C175.

It belongs to the zinc-containing alcohol dehydrogenase family. In terms of assembly, homodimer. The cofactor is Zn(2+).

The catalysed reaction is (2E)-geraniol + NAD(+) = (2E)-geranial + NADH + H(+). It catalyses the reaction perillyl alcohol + NAD(+) = perillyl aldehyde + NADH + H(+). It participates in terpene metabolism; monoterpene degradation. Is inhibited by EDTA, N-ethylmaleimide, diethylpyrocarbonate, and 1-cyclohexyl-N-(2-morpholinoethyl)carbodiimide in vitro. In terms of biological role, involved in the degradation of the monoterpenes beta-myrcene and limonene. During anaerobic degradation of beta-myrcene, catalyzes the NAD(+)-dependent oxidation of geraniol to geranial. Can also catalyze the oxidation of (S)-perillyl alcohol to perillyl aldehyde, and to a lesser extent, the oxidation of nerol, citronellol, cumic alcohol, and benzyl alcohol. Cannot use NADP(+) instead of NAD(+) as cosubstrate. This chain is Geraniol dehydrogenase, found in Castellaniella defragrans (strain DSM 12143 / CCUG 39792 / 65Phen) (Alcaligenes defragrans).